The sequence spans 131 residues: Arsenate reductase (131 aa).

Active-site nucleophile residues include Cys10, Cys82, and Cys89. Cystine bridges form between Cys10-Cys82 and Cys82-Cys89.

Belongs to the low molecular weight phosphotyrosine protein phosphatase family. Thioredoxin-coupled ArsC subfamily.

It is found in the cytoplasm. It catalyses the reaction arsenate + [thioredoxin]-dithiol + H(+) = arsenite + [thioredoxin]-disulfide + H2O. Its function is as follows. Catalyzes the reduction of arsenate [As(V)] to arsenite [As(III)]. The sequence is that of Arsenate reductase from Staphylococcus aureus (strain COL).